The primary structure comprises 122 residues: uncharacterized protein (122 aa).

Over residues 1–15 the composition is skewed to basic and acidic residues; the sequence is MAEPGGRGDYRKDGR. The disordered stretch occupies residues 1–49; it reads MAEPGGRGDYRKDGRLPSLSRSPLSTTLGTSPACGLEIPPTSGARPDGS. The segment covering 16–32 has biased composition (low complexity); that stretch reads LPSLSRSPLSTTLGTSP.

This is an uncharacterized protein from Homo sapiens (Human).